The following is a 362-amino-acid chain: Class I histocompatibility antigen, Gogo-OKO alpha chain (362 aa).

Residues 1–24 form the signal peptide; the sequence is MAVVAPRTLLLLLSGTLALTRTWA. The tract at residues 25-114 is alpha-1; that stretch reads GSHSMRYFYT…LRGYYNQSEG (90 aa). The Extracellular segment spans residues 25–308; it reads GSHSMRYFYT…EPSSQPTIPI (284 aa). The N-linked (GlcNAc...) asparagine glycan is linked to Asn-110. The segment at 115–206 is alpha-2; that stretch reads GSHTIQRMYG…ENGKETLQRT (92 aa). 2 cysteine pairs are disulfide-bonded: Cys-125–Cys-188 and Cys-227–Cys-283. The tract at residues 207–298 is alpha-3; that stretch reads DPPKTHMTHH…GLPKPLTLRW (92 aa). In terms of domain architecture, Ig-like C1-type spans 209–295; it reads PKTHMTHHPV…QHEGLPKPLT (87 aa). The segment at 299 to 308 is connecting peptide; sequence EPSSQPTIPI. The chain crosses the membrane as a helical span at residues 309-332; it reads VGIIAGLVLLGAVITGAVVAAMMW. Topologically, residues 333-362 are cytoplasmic; sequence RKKSSGRKGGSYSQAASSDSAQGSDVSLTA. Positions 337–362 are disordered; it reads SGRKGGSYSQAASSDSAQGSDVSLTA. The segment covering 342-362 has biased composition (low complexity); the sequence is GSYSQAASSDSAQGSDVSLTA.

Belongs to the MHC class I family. In terms of assembly, heterodimer of an alpha chain and a beta chain (beta-2-microglobulin).

The protein localises to the membrane. Involved in the presentation of foreign antigens to the immune system. The sequence is that of Class I histocompatibility antigen, Gogo-OKO alpha chain from Gorilla gorilla gorilla (Western lowland gorilla).